The following is an 88-amino-acid chain: ATP synthase F(0) complex subunit f, mitochondrial (88 aa).

Ala2 carries the post-translational modification N-acetylalanine. Ser3 carries the phosphoserine modification. Lys16 is subject to N6-acetyllysine. A helical transmembrane segment spans residues 62 to 79 (MVLAAYVVFSYCISYKEL).

Belongs to the ATPase F chain family. In terms of assembly, component of the ATP synthase complex composed at least of ATP5F1A/subunit alpha, ATP5F1B/subunit beta, ATP5MC1/subunit c (homooctomer), MT-ATP6/subunit a, MT-ATP8/subunit 8, ATP5ME/subunit e, ATP5MF/subunit f, ATP5MG/subunit g, ATP5MK/subunit k, ATP5MJ/subunit j, ATP5F1C/subunit gamma, ATP5F1D/subunit delta, ATP5F1E/subunit epsilon, ATP5PF/subunit F6, ATP5PB/subunit b, ATP5PD/subunit d, ATP5PO/subunit OSCP. ATP synthase complex consists of a soluble F(1) head domain (subunits alpha(3) and beta(3)) - the catalytic core - and a membrane F(0) domain - the membrane proton channel (subunits c, a, 8, e, f, g, k and j). These two domains are linked by a central stalk (subunits gamma, delta, and epsilon) rotating inside the F1 region and a stationary peripheral stalk (subunits F6, b, d, and OSCP).

Its subcellular location is the mitochondrion. It is found in the mitochondrion inner membrane. Its function is as follows. Subunit f, of the mitochondrial membrane ATP synthase complex (F(1)F(0) ATP synthase or Complex V) that produces ATP from ADP in the presence of a proton gradient across the membrane which is generated by electron transport complexes of the respiratory chain. ATP synthase complex consist of a soluble F(1) head domain - the catalytic core - and a membrane F(1) domain - the membrane proton channel. These two domains are linked by a central stalk rotating inside the F(1) region and a stationary peripheral stalk. During catalysis, ATP synthesis in the catalytic domain of F(1) is coupled via a rotary mechanism of the central stalk subunits to proton translocation. In vivo, can only synthesize ATP although its ATP hydrolase activity can be activated artificially in vitro. Part of the complex F(0) domain. The chain is ATP synthase F(0) complex subunit f, mitochondrial from Rattus norvegicus (Rat).